A 111-amino-acid chain; its full sequence is Disintegrin piscivostatin-alpha (111 aa).

A signal peptide spans 1 to 20 (MIQVLLVTICLAVFPYQGSS). Positions 21 to 44 (IILESGNVNDYEVVYPRKITPLPK) are excised as a propeptide. Residues 45–111 (GAVQPKNPCC…GDCPRKHFYA (67 aa)) enclose the Disintegrin domain. Cystine bridges form between Cys53-Cys76, Cys67-Cys73, Cys72-Cys97, and Cys85-Cys104. The Cell attachment site signature appears at 89–91 (RGD). The propeptide occupies 110–111 (YA).

This sequence belongs to the disintegrin family. Dimeric disintegrin subfamily. As to quaternary structure, heterodimer with piscivostatin-beta; disulfide-linked. As to expression, expressed by the venom gland.

Its subcellular location is the secreted. In terms of biological role, inhibits fibrinogen interaction with platelets. Acts by binding to alpha-IIb/beta-3 (ITGA2B/ITGB3) on the platelet surface and inhibits both ADP-induced platelet aggregation and platelet aggregate dissociation in human platelet-rich plasma. This is Disintegrin piscivostatin-alpha from Agkistrodon piscivorus piscivorus (Eastern cottonmouth).